A 508-amino-acid polypeptide reads, in one-letter code: MSQSSIAIQIEALLTYALQHGLITKWDIDASRNRVLDVLDLDELEPVEQVDVECEMPYPILENILDWAAENGRLEANTVTYRDLLDTKLMGALLGQPSETIRTFYERYEQQGPEEATKVFYDFSKQVHYIRTDRIAKNEHWFSETPYGQLEITINLSKPEKDPKAIAQAKHLQASSYPKCLLCKENVGYRGRVNHPARQNLRVIPVELNQEQWYMQFSPYVYYNEHAIVFSGEHVPMKISTETFARLLEFTEKFPHYFIGSNADLPIVGGSILSHDHFQGGNHAFPMAKASMEKTFSISRFPSVIAGIVKWPMSVVRLQGMDRSELVKAADHVYHAWQAYGDEAADIYPFTGDTPHNTITPIARRRGELFELDLVLRNNRTSKEHPDGIFHPHQEVHHIKKENIGLIEVMGLAVLPGRLKEELELLAEALLSSDPRQVIARYEQIQKHEAWALAIKERHAHLHDSNVMDILRDEIGKVFATILAHAGVFKRTGEGAAAFDRFISTLNQ.

Belongs to the galactose-1-phosphate uridylyltransferase type 2 family.

The protein localises to the cytoplasm. The enzyme catalyses alpha-D-galactose 1-phosphate + UDP-alpha-D-glucose = alpha-D-glucose 1-phosphate + UDP-alpha-D-galactose. The protein operates within carbohydrate metabolism; galactose metabolism. This chain is Galactose-1-phosphate uridylyltransferase (galT), found in Halalkalibacterium halodurans (strain ATCC BAA-125 / DSM 18197 / FERM 7344 / JCM 9153 / C-125) (Bacillus halodurans).